The chain runs to 129 residues: Follitropin subunit beta (129 aa).

A signal peptide spans 1-18 (MKTVQFCFLFCCWKAICC). 6 disulfide bridges follow: Cys21–Cys69, Cys35–Cys84, Cys38–Cys122, Cys46–Cys100, Cys50–Cys102, and Cys105–Cys112. 2 N-linked (GlcNAc...) asparagine glycosylation sites follow: Asn25 and Asn42.

This sequence belongs to the glycoprotein hormones subunit beta family. In terms of assembly, heterodimer. The active follitropin is a heterodimer composed of an alpha chain/CGA shared with other hormones and a unique beta chain/FSHB shown here.

The protein resides in the secreted. Together with the alpha chain CGA constitutes follitropin, the follicle-stimulating hormone, and provides its biological specificity to the hormone heterodimer. Binds FSHR, a G protein-coupled receptor, on target cells to activate downstream signaling pathways. Follitropin is involved in follicle development and spermatogenesis in reproductive organs. The sequence is that of Follitropin subunit beta (FSHB) from Macaca fascicularis (Crab-eating macaque).